Here is a 413-residue protein sequence, read N- to C-terminus: Serine hydroxymethyltransferase (413 aa).

Residues L117 and 121–123 each bind (6S)-5,6,7,8-tetrahydrofolate; that span reads GHL. The residue at position 226 (K226) is an N6-(pyridoxal phosphate)lysine. (6S)-5,6,7,8-tetrahydrofolate is bound by residues E241 and 349–351; that span reads SPF.

The protein belongs to the SHMT family. Homodimer. Requires pyridoxal 5'-phosphate as cofactor.

It is found in the cytoplasm. It catalyses the reaction (6R)-5,10-methylene-5,6,7,8-tetrahydrofolate + glycine + H2O = (6S)-5,6,7,8-tetrahydrofolate + L-serine. It participates in one-carbon metabolism; tetrahydrofolate interconversion. Its pathway is amino-acid biosynthesis; glycine biosynthesis; glycine from L-serine: step 1/1. Catalyzes the reversible interconversion of serine and glycine with tetrahydrofolate (THF) serving as the one-carbon carrier. This reaction serves as the major source of one-carbon groups required for the biosynthesis of purines, thymidylate, methionine, and other important biomolecules. Also exhibits THF-independent aldolase activity toward beta-hydroxyamino acids, producing glycine and aldehydes, via a retro-aldol mechanism. This chain is Serine hydroxymethyltransferase, found in Halalkalibacterium halodurans (strain ATCC BAA-125 / DSM 18197 / FERM 7344 / JCM 9153 / C-125) (Bacillus halodurans).